We begin with the raw amino-acid sequence, 374 residues long: Protein TAB2 homolog, chloroplastic (374 aa).

The N-terminal 64 residues, 1–64 (MATLGFNTRR…SLSITKEQEV (64 aa)), are a transit peptide targeting the chloroplast. A disordered region spans residues 58-84 (ITKEQEVANEVEEDDPTSELSYLDPES). Acidic residues predominate over residues 64-74 (VANEVEEDDPT).

The protein localises to the plastid. The protein resides in the chloroplast. Nuclear genome-encoded A/U-rich RNA-binding protein involved in the biogenesis of photosystem I (PSI) and II (PSII). Required for the light-controlled accumulation of PSI and PSII during early plant development. Does not seem to be required for the translation of mRNAs of the PSI subunits. This Arabidopsis thaliana (Mouse-ear cress) protein is Protein TAB2 homolog, chloroplastic.